The sequence spans 308 residues: MTNIEDKDWSRSEGDSWDIVSSVGFTALGVAAARAVENREADPLVRDPYAEHFVRAAGEPHLIGLLDSSEPKPPNPGTAPRHIGLRSKFFDEFFINATNSGCKQAVILAAGLDVRAHRLPWPAGTKVFELDQPQVLEFKDRVLAEHDATPTSDRREIAVDLRDDWPAALLAAGFDPEVPTAWSAEGLIIYLPSAAQDLLFERVVALSAPGSQVAVEATRGRPDIAKWGEMQKKYADEGHPMSKVDITTLFYDEERADVAEWLAARGWKVQGSHALELAAAYGVEIPELPEDVVEVVKQGNYVTAVLPS.

Residues aspartate 131 and 160-161 (DL) each bind S-adenosyl-L-methionine.

This sequence belongs to the UPF0677 family.

Its function is as follows. Exhibits S-adenosyl-L-methionine-dependent methyltransferase activity. The sequence is that of Putative S-adenosyl-L-methionine-dependent methyltransferase MAB_4584c from Mycobacteroides abscessus (strain ATCC 19977 / DSM 44196 / CCUG 20993 / CIP 104536 / JCM 13569 / NCTC 13031 / TMC 1543 / L948) (Mycobacterium abscessus).